The primary structure comprises 649 residues: Exolysin (649 aa).

A helical membrane pass occupies residues 37–57 (LIYTIIVLVVAAVVGLVIFIV). Positions 184–268 (KDIIDNKLRE…KKATDDFKKK (85 aa)) form a coiled coil. Residues 258–275 (AKKATDDFKKKKQADKNK) show a composition bias toward basic and acidic residues. Residues 258–325 (AKKATDDFKK…QFQTRDSKGQ (68 aa)) are disordered. The span at 278–312 (ASKPSPGPKPAPKPSPGPKPAPKPSPGPKPSPGPS) shows a compositional bias: pro residues. The tract at residues 407-649 (GGGGGGGNVS…KNVKISKWSP (243 aa)) is catalytic.

Requires Ca(2+) as cofactor. It depends on Mg(2+) as a cofactor.

Its subcellular location is the membrane. It localises to the virion. With respect to regulation, inhibited by Mn(2+), Cu(2+), Co(2+), Fe(2+), Zn(2+), Ni(2+), EDTA and EGTA. Functionally, during viral entry, involved in the degradation of the host cell wall at the site of attachment. The polypeptide is Exolysin (Chlorella (PBCV-1)).